The chain runs to 129 residues: uncharacterized protein (129 aa).

Positions 85–108 (SSAADSDDSSSCSECDSDALLSDD) are enriched in low complexity. A disordered region spans residues 85–110 (SSAADSDDSSSCSECDSDALLSDDGP).

This is an uncharacterized protein from Microplitis demolitor (Parasitoid wasp).